Consider the following 242-residue polypeptide: MTTVSMRDMLQAGVHFGHQTRYWNPKMKPFIFGARNGVHIINLEHTVPMFNEALAFISNVASKKGKVLFVGTKRAASEAIKESAISCEQFYVDHRWLGGMLTNWKTVRQSIKRLKDLESQSVDGTFDKLTKKEALMRTRELEKLEKSLGGIKNMGGLPDVIFVIGADHEHIAIKEANNLGIPVVAVVDTNSSPDGINYIVPGNDDAMRSIRLYTQSVAAAAKAGRGQDLAVQAEQDGFVEAE.

Belongs to the universal ribosomal protein uS2 family.

The protein is Small ribosomal subunit protein uS2 of Shewanella sediminis (strain HAW-EB3).